The chain runs to 141 residues: Large ribosomal subunit protein uL11 (141 aa).

Belongs to the universal ribosomal protein uL11 family. As to quaternary structure, part of the ribosomal stalk of the 50S ribosomal subunit. Interacts with L10 and the large rRNA to form the base of the stalk. L10 forms an elongated spine to which L12 dimers bind in a sequential fashion forming a multimeric L10(L12)X complex. One or more lysine residues are methylated.

Its function is as follows. Forms part of the ribosomal stalk which helps the ribosome interact with GTP-bound translation factors. This chain is Large ribosomal subunit protein uL11, found in Prochlorococcus marinus (strain MIT 9515).